A 144-amino-acid polypeptide reads, in one-letter code: 3-hydroxyacyl-[acyl-carrier-protein] dehydratase FabZ (144 aa).

H47 is an active-site residue.

The protein belongs to the thioester dehydratase family. FabZ subfamily.

The protein resides in the cytoplasm. The enzyme catalyses a (3R)-hydroxyacyl-[ACP] = a (2E)-enoyl-[ACP] + H2O. Involved in unsaturated fatty acids biosynthesis. Catalyzes the dehydration of short chain beta-hydroxyacyl-ACPs and long chain saturated and unsaturated beta-hydroxyacyl-ACPs. The protein is 3-hydroxyacyl-[acyl-carrier-protein] dehydratase FabZ of Alcanivorax borkumensis (strain ATCC 700651 / DSM 11573 / NCIMB 13689 / SK2).